The following is a 345-amino-acid chain: MKTENPLSFDYKSAGVDIAAGNALVERIKPAARKTVRPGVLAGLGGFGSLFELPVDRYRKPVLVAGTDGVGTKLRLAIESGRHGGVGIDLVAMCANDIVVQGAEPLFFLDYYATGKLDVDVAASVIAGIAQGCERAGCALVGGETAEMPGMYAGGDYDLAGFCVGVVEKEAIIDGSRVRPGDRLIGLASSGPHSNGYSLIRKIVGHSGLGLDAPVAGRALGDWLLEPTRIYVKPLLELLKSVEVHALAHITGGGITENLPRVLPVGTAARIDTAAWTMPEIFRWLQRHGGVETPEMFRTFNCGVGMIVCVAPEDEARTLEALSSLGERAFAVGEIIAGEPAVHYV.

Belongs to the AIR synthase family.

It is found in the cytoplasm. The catalysed reaction is 2-formamido-N(1)-(5-O-phospho-beta-D-ribosyl)acetamidine + ATP = 5-amino-1-(5-phospho-beta-D-ribosyl)imidazole + ADP + phosphate + H(+). Its pathway is purine metabolism; IMP biosynthesis via de novo pathway; 5-amino-1-(5-phospho-D-ribosyl)imidazole from N(2)-formyl-N(1)-(5-phospho-D-ribosyl)glycinamide: step 2/2. The protein is Phosphoribosylformylglycinamidine cyclo-ligase of Methylococcus capsulatus (strain ATCC 33009 / NCIMB 11132 / Bath).